A 291-amino-acid chain; its full sequence is uncharacterized protein (291 aa).

6 helical membrane passes run 13 to 33, 40 to 60, 81 to 101, 128 to 148, 158 to 178, and 220 to 240; these read FDLF…MEMG, LGTV…LGFL, GFLN…LICI, FGLF…RLLL, VILG…YLEY, and GNVW…ILLA. The N-linked (GlcNAc...) asparagine glycan is linked to N249. Residues 269–291 form a disordered region; the sequence is MASEDPPKDPLPRQEGGGGDTIA.

Its subcellular location is the membrane. This is an uncharacterized protein from Encephalitozoon cuniculi (strain GB-M1) (Microsporidian parasite).